We begin with the raw amino-acid sequence, 147 residues long: Peptide methionine sulfoxide reductase MsrB (147 aa).

Residues 8 to 131 form the MsrB domain; it reads KEELKKVLTE…NSASLKFIPK (124 aa). Cys120 acts as the Nucleophile in catalysis.

Belongs to the MsrB Met sulfoxide reductase family.

The catalysed reaction is L-methionyl-[protein] + [thioredoxin]-disulfide + H2O = L-methionyl-(R)-S-oxide-[protein] + [thioredoxin]-dithiol. The protein is Peptide methionine sulfoxide reductase MsrB of Clostridium perfringens (strain ATCC 13124 / DSM 756 / JCM 1290 / NCIMB 6125 / NCTC 8237 / Type A).